The chain runs to 201 residues: Large ribosomal subunit protein uL4 (201 aa).

Residues Ala39–Arg67 form a disordered region.

It belongs to the universal ribosomal protein uL4 family. Part of the 50S ribosomal subunit.

In terms of biological role, one of the primary rRNA binding proteins, this protein initially binds near the 5'-end of the 23S rRNA. It is important during the early stages of 50S assembly. It makes multiple contacts with different domains of the 23S rRNA in the assembled 50S subunit and ribosome. Forms part of the polypeptide exit tunnel. The polypeptide is Large ribosomal subunit protein uL4 (Marinomonas sp. (strain MWYL1)).